Reading from the N-terminus, the 397-residue chain is MEEIGIVIVGGGIAGLATSIALHRKGIKSVVLERAEKVRSEGAGIGTLSNGWRALDQLGVGDRLRLNSSLIHKARTMLIENGKKREFVSNIVDEARCIKRNDLVEALSDALPKGTIRFGSHIVSIEQDKTTLFPVVHLANGNSIKAKVLIGCDGANSIVSDYLQLNPKKAFACRAVRGFTKYPNGHGFPQEVLRIKQGNVLIGRLPLTDNQVFWFLVHMQDNNHNGKDQESIANLCRKWADDLSEDWKEMVKICNVESLTLTHLRYRAPSEIMLGKFRRGTVTVAGDAMHVMGPFLAQGGSAALEDAVVLARCLARKVGPDHGDLLKDCSMKNIEEAIDEYVDERRMRLLGLSVQTYLTGRSLQTSSKVLRLMFIALLLLLFGRDQIRHTRYDCGRL.

It belongs to the 3-hydroxybenzoate 6-hydroxylase family. Monomer. FAD is required as a cofactor. Expressed in seedlings, roots, leaves, flowers and siliques.

The chain is Monooxygenase 1 from Arabidopsis thaliana (Mouse-ear cress).